Consider the following 344-residue polypeptide: 3-dehydroquinate synthase (344 aa).

Residues 60–65, 94–98, 118–119, Lys131, Lys140, and 158–161 contribute to the NAD(+) site; these read DGEEYK, GVISD, TT, and FLNT. Glu173, His232, and His249 together coordinate Zn(2+).

It belongs to the sugar phosphate cyclases superfamily. Dehydroquinate synthase family. The cofactor is Co(2+). It depends on Zn(2+) as a cofactor. NAD(+) is required as a cofactor.

The protein resides in the cytoplasm. It catalyses the reaction 7-phospho-2-dehydro-3-deoxy-D-arabino-heptonate = 3-dehydroquinate + phosphate. It participates in metabolic intermediate biosynthesis; chorismate biosynthesis; chorismate from D-erythrose 4-phosphate and phosphoenolpyruvate: step 2/7. Catalyzes the conversion of 3-deoxy-D-arabino-heptulosonate 7-phosphate (DAHP) to dehydroquinate (DHQ). The protein is 3-dehydroquinate synthase of Campylobacter hominis (strain ATCC BAA-381 / DSM 21671 / CCUG 45161 / LMG 19568 / NCTC 13146 / CH001A).